Here is a 216-residue protein sequence, read N- to C-terminus: Large ribosomal subunit protein uL3 (216 aa).

Glutamine 157 is modified (N5-methylglutamine).

Belongs to the universal ribosomal protein uL3 family. In terms of assembly, part of the 50S ribosomal subunit. Forms a cluster with proteins L14 and L19. Post-translationally, methylated by PrmB.

In terms of biological role, one of the primary rRNA binding proteins, it binds directly near the 3'-end of the 23S rRNA, where it nucleates assembly of the 50S subunit. This chain is Large ribosomal subunit protein uL3, found in Stenotrophomonas maltophilia (strain R551-3).